A 225-amino-acid chain; its full sequence is Cytidylate kinase (225 aa).

Residue 12–20 (GPSGAGKGT) coordinates ATP.

This sequence belongs to the cytidylate kinase family. Type 1 subfamily.

It is found in the cytoplasm. It catalyses the reaction CMP + ATP = CDP + ADP. The enzyme catalyses dCMP + ATP = dCDP + ADP. This is Cytidylate kinase from Stenotrophomonas maltophilia (strain K279a).